Consider the following 425-residue polypeptide: Riboflavin biosynthesis protein RibBA (425 aa).

Residues 1–204 (MTRLDSVERA…IADLIEWRRK (204 aa)) are DHBP synthase. Residues 28-29 (RE), Asp33, 141-145 (RPGHT), and Glu165 contribute to the D-ribulose 5-phosphate site. Mg(2+) is bound at residue Glu29. Residue His144 coordinates Mg(2+). Residues 205 to 425 (HEKHIERVAE…HLPGEFGGAL (221 aa)) are GTP cyclohydrolase II. 259-263 (RVHSE) is a binding site for GTP. The Zn(2+) site is built by Cys264, Cys275, and Cys277. Residues Gln280, 303 to 305 (EGR), and Thr325 each bind GTP. The Proton acceptor; for GTP cyclohydrolase activity role is filled by Asp337. Arg339 functions as the Nucleophile; for GTP cyclohydrolase activity in the catalytic mechanism. GTP contacts are provided by Thr360 and Lys365.

It in the N-terminal section; belongs to the DHBP synthase family. The protein in the C-terminal section; belongs to the GTP cyclohydrolase II family. It depends on Mg(2+) as a cofactor. Mn(2+) is required as a cofactor. Zn(2+) serves as cofactor.

It catalyses the reaction D-ribulose 5-phosphate = (2S)-2-hydroxy-3-oxobutyl phosphate + formate + H(+). The catalysed reaction is GTP + 4 H2O = 2,5-diamino-6-hydroxy-4-(5-phosphoribosylamino)-pyrimidine + formate + 2 phosphate + 3 H(+). It functions in the pathway cofactor biosynthesis; riboflavin biosynthesis; 2-hydroxy-3-oxobutyl phosphate from D-ribulose 5-phosphate: step 1/1. Its pathway is cofactor biosynthesis; riboflavin biosynthesis; 5-amino-6-(D-ribitylamino)uracil from GTP: step 1/4. Functionally, catalyzes the conversion of D-ribulose 5-phosphate to formate and 3,4-dihydroxy-2-butanone 4-phosphate. Its function is as follows. Catalyzes the conversion of GTP to 2,5-diamino-6-ribosylamino-4(3H)-pyrimidinone 5'-phosphate (DARP), formate and pyrophosphate. The sequence is that of Riboflavin biosynthesis protein RibBA from Mycobacterium ulcerans (strain Agy99).